The sequence spans 303 residues: MHGIEQPQLPLDYVHRCASTSFLLASLDGLLSEARELSGPLALITSSYYLLVSIALCWAIPGSFWYRPGCWLQPVSGRNLIFCGPTEALQRFRLYAARLGLVLSENCPRHGQSAAITLQSYWALPNNIWMDMAQLDLLTFSMPIANTFAYLADCEARFPPIVEGVGSAYYVPTLLGLTHQDPRLYLALRRRNLDLSGEPHRVRPGVLESMALLCSSVRSTSRSRQIPPLYGSVLHHVLGLAERDCILFDTDSNYSSYTHRVLEQDRNRADQSLFSIDLEYVHDLELIALGYSDEDDEDLDNFF.

It belongs to the polerovirus P0 protein family.

Suppressor of RNA-mediated gene silencing. The sequence is that of Suppressor of silencing P0 from Pea enation mosaic virus-1 (strain WSG) (PEMV-1).